Here is a 352-residue protein sequence, read N- to C-terminus: Staphylococcal superantigen-like 3 (352 aa).

Positions 1 to 30 are cleaved as a signal peptide; sequence MKMRTIAKTSLALGLLTTGAITVTTQSVKA. Positions 61 to 165 are disordered; it reads ATTQAANTRQ…TIKQAQTDMT (105 aa). The segment covering 69-104 has biased composition (basic and acidic residues); it reads RQERTPKLEKAPNTNEEKTSASKIEKISQPKQEEQK. Positions 114–141 are enriched in low complexity; sequence PKQEQSQTTTESTTPKTKVTTPPSTNTP. Residues 142–164 show a composition bias toward polar residues; the sequence is QPMQSTKSDTPQSPTIKQAQTDM. A sialyl Lewis X-binding region spans residues 228-326; sequence IDVFIVLEDN…VIKMKNGGKY (99 aa).

The protein belongs to the staphylococcal/streptococcal toxin family. As to quaternary structure, interacts with host TLR2 (via its extracellular domain).

Its subcellular location is the secreted. Its function is as follows. Secreted protein that plays an essential role in immune innate response inhibition by interacting with and inhibiting host TLR2. In turn, bacteria recognition by immune cells is impaired and cytokine production is inhibited. Mechanistically, by interacting with TLR2, blocks ligand binding and thus inhibits activation. Second, by interacting with an already formed TLR2-lipopeptide complex, prevents TLR heterodimerization and downstream signaling. The interaction with host TLR2 does not involve sialyl Lewis X interactions. The protein is Staphylococcal superantigen-like 3 of Staphylococcus aureus (strain Newman).